A 114-amino-acid polypeptide reads, in one-letter code: MANVYDTANQMAADIKTTQEFQDLKKAFDLLKLDTVAYGLFQQFQQKQYEMQQKSMQGQDFTDDEVKSLQELGDKMRGIQPIQNLMAKEQGLSQMMDELNKIISQPIIDVYQGK.

The protein belongs to the UPF0342 family.

The chain is UPF0342 protein LSEI_1724 from Lacticaseibacillus paracasei (strain ATCC 334 / BCRC 17002 / CCUG 31169 / CIP 107868 / KCTC 3260 / NRRL B-441) (Lactobacillus paracasei).